A 345-amino-acid chain; its full sequence is 4-hydroxy-2-oxovalerate aldolase (345 aa).

Positions 8–260 (ITVHDMTLRD…ETGVDVFKIQ (253 aa)) constitute a Pyruvate carboxyltransferase domain. 16–17 (RD) contacts substrate. D17 provides a ligand contact to Mn(2+). H20 acts as the Proton acceptor in catalysis. Residues S170 and H199 each coordinate substrate. Mn(2+) contacts are provided by H199 and H201. Y290 is a binding site for substrate.

It belongs to the 4-hydroxy-2-oxovalerate aldolase family.

It carries out the reaction (S)-4-hydroxy-2-oxopentanoate = acetaldehyde + pyruvate. The sequence is that of 4-hydroxy-2-oxovalerate aldolase from Leptothrix cholodnii (strain ATCC 51168 / LMG 8142 / SP-6) (Leptothrix discophora (strain SP-6)).